Here is a 358-residue protein sequence, read N- to C-terminus: Branched-chain amino acid aminotransferase gloG (358 aa).

Arg91 contributes to the pyridoxal 5'-phosphate binding site. Residue Lys195 is the Proton acceptor of the active site. N6-(pyridoxal phosphate)lysine is present on Lys195. Glu231 contributes to the pyridoxal 5'-phosphate binding site.

The protein belongs to the class-IV pyridoxal-phosphate-dependent aminotransferase family. It depends on pyridoxal 5'-phosphate as a cofactor.

It catalyses the reaction L-isoleucine + 2-oxoglutarate = (S)-3-methyl-2-oxopentanoate + L-glutamate. It carries out the reaction L-leucine + 2-oxoglutarate = 4-methyl-2-oxopentanoate + L-glutamate. The catalysed reaction is L-valine + 2-oxoglutarate = 3-methyl-2-oxobutanoate + L-glutamate. The protein operates within mycotoxin biosynthesis. Its function is as follows. Branched-chain amino acid aminotransferase; part of the gene cluster that mediates the biosynthesis of pneumocandins, lipohexapeptides of the echinocandin family that prevent fungal cell wall formation by non-competitive inhibition of beta-1,3-glucan synthase. The 10,12-dimethylmyristoyl side chain is synthesized by the reducing polyketide synthase gloL/GLPKS4. The thioesterase gloN/GLHYD exclusively interacts with gloL/GLPKS4 to maintain turnover of the polyketide side chain. The 10R,12S-dimethylmyristic acid is then transferred to the first thiolation domain of the nonribosomal peptide synthetase gloA/GLNRPS4 by the acyl-AMP ligase gloD/GLligase, followed by its acylation to L-ornithine to trigger elongation of the cyclic hexapeptide. L-ornithine, 4R-hydroxyl-L-proline (generated from L-proline by the dioxygenase gloF/GLOXY2), 3S-hydroxyl-L-homotyrosine (generated by gloG/GLHtyB, gloH/GLHtyA, gloI/GLHtyC, gloJ/GLHtyD and hydroxylated at C-3 by the dioxygenase gloM/GLOXY1), 3R-hydroxyl-L-glutamine (generated from L-glutamine probably by the dioxygenase gloE/GLOXY3) and 3S-hydroxyl-L-proline (generated from L-proline by the dioxygenase gloF/GLOXY2 to yield pneumocandin B0), or 3S-hydroxyl-4S-methyl-L-proline (generated from L-leucine by the dioxygenase gloC/GLOXY4 to yield pneumocandin A0) are sequentially added to the growing chain. The last C domain of gloA/GLNRPS4 is proposed to be responsible for cyclization by condensation to form the peptide bond between L-ornithine and 3S-hydroxyl-4S-methyl-L-proline (for pneumocandin A0) or 3S-hydroxyl-L-proline (for pneumocandin B0). Finally, the subsequent C-4 hydroxylation of 3S-hydroxyl-L-homotyrosine and L-ornithine dihydroxylation at C-4 and C-5 are performed by the cytochrome P450 monooxygenases gloP/GLP450-1 and gloO/GLP450-2, respectively. The sequence is that of Branched-chain amino acid aminotransferase gloG from Glarea lozoyensis (strain ATCC 20868 / MF5171).